Reading from the N-terminus, the 79-residue chain is Small polypeptide DEVIL 8 (79 aa).

Residues 1-12 (MSRLRNSAQLQL) show a composition bias toward polar residues. The interval 1-37 (MSRLRNSAQLQLSKKESLGDNGGALNTTRSSRQKQGK) is disordered. N-linked (GlcNAc...) asparagine glycosylation is present at N26. The required for DVL/RTFL small polypeptide activity stretch occupies residues 39-70 (GFTRKCGRLVKEQRARFYIMRRCVVMLICWTD). Residues 55–71 (FYIMRRCVVMLICWTDH) form a helical membrane-spanning segment. N-linked (GlcNAc...) asparagine glycosylation is present at N74.

The protein belongs to the DVL/RTFL small polypeptides family.

It is found in the cell membrane. Its function is as follows. Small polypeptide acting as a regulatory molecule which coordinates cellular responses required for differentiation, growth and development, probably by restricting polar cell proliferation in lateral organs and coordinating socket cell recruitment and differentiation at trichome sites. The chain is Small polypeptide DEVIL 8 from Arabidopsis thaliana (Mouse-ear cress).